A 427-amino-acid chain; its full sequence is Trigger factor (427 aa).

The 86-residue stretch at 163–248 (GNIAIIDFKG…VKGIKVKELP (86 aa)) folds into the PPIase FKBP-type domain.

Belongs to the FKBP-type PPIase family. Tig subfamily.

Its subcellular location is the cytoplasm. The enzyme catalyses [protein]-peptidylproline (omega=180) = [protein]-peptidylproline (omega=0). Involved in protein export. Acts as a chaperone by maintaining the newly synthesized protein in an open conformation. Functions as a peptidyl-prolyl cis-trans isomerase. The protein is Trigger factor of Clostridium botulinum (strain Alaska E43 / Type E3).